We begin with the raw amino-acid sequence, 732 residues long: MKFDKPAGENPIDQLKVVGRPHDRIDGPLKTTGTARYAYEWHEEAPNAAYGYIVGSAIAKGRLTALDTDAAQKAPGVLAVITASNAGALGKGDKNTARLLGGPTIEHYHQAIALVVAETFEQARAAASLVQAHYRRNKGAYSLADEKQAVNQPPEDTPDKNVGDFDGAFTSAAVKIDATYTTPDQSHMAMEPHASMAVWDGNKLTLWTSNQMIDWCRTDLAKTLKVPVENVRIISPYIGGGFGGKLFLRSDALLAALAARAVKRPVKVMLPRPSIPNNTTHRPATLQHLRIGADQSGKITAISHESWSGNLPGGTPETAVQQSELLYAGANRHTGLRLATLDLPEGNAMRAPGEAPGLMALEIAIDELAEKAGIDPVEFRILNDTQVDPADPTRCFSRRQLIECLRTGADKFGWKQRNATPGQVRDGEWLVGHGVAAGFRNNLLEKSGARVHLEQNGTVTVETDMTDIGTGSYTILAQTAAEMLGVPLEQVAVHLGDSSFPVSAGSGGQWGANTSTSGVYAACMKLREMIASAVGFDPEQSQFADGKITNGTRSATLHEATAGGRLTAEESIEFGTLSKEYQQSTFAGHFVEVGVHSATGEVRVRRMLAVCAAGRILNPKTARSQVIGAMTMGMGAALMEELAVDDRLGYFVNHDMAGYEVPVHADIPKQEVIFLDDTDPISSPMKAKGVGELGLCGVSAAIANAVYNATGIRVRDYPITLDKLLDKLPDVV.

Mo-molybdopterin cytosine dinucleotide is bound by residues 241-242, 468-470, 511-512, 615-621, glutamine 625, and 688-691; these read GF, IGT, GA, RILNPKT, and KGVG. The Proton acceptor role is filled by glutamate 692.

The protein belongs to the xanthine dehydrogenase family. In terms of assembly, heterotrimer composed of PaoA, PaoB and PaoC. Requires Mo-molybdopterin cytosine dinucleotide as cofactor.

Its subcellular location is the periplasm. The catalysed reaction is an aldehyde + A + H2O = a carboxylate + AH2 + H(+). Its activity is regulated as follows. The complex requires PaoD for activity. Oxidizes aldehydes to the corresponding carboxylic acids with a preference for aromatic aldehydes. It might play a role in the detoxification of aldehydes to avoid cell damage. The protein is Aldehyde oxidoreductase molybdenum-binding subunit PaoC of Escherichia coli (strain K12).